We begin with the raw amino-acid sequence, 380 residues long: 1-deoxy-D-xylulose 5-phosphate reductoisomerase (380 aa).

8 residues coordinate NADPH: Thr-10, Gly-11, Ser-12, Ile-13, Gly-36, Arg-37, Asn-38, and Asn-120. Position 121 (Lys-121) interacts with 1-deoxy-D-xylulose 5-phosphate. Position 122 (Glu-122) interacts with NADPH. Position 146 (Asp-146) interacts with Mn(2+). 1-deoxy-D-xylulose 5-phosphate-binding residues include Ser-147, Glu-148, Ser-172, and His-195. Mn(2+) is bound at residue Glu-148. Residue Gly-201 coordinates NADPH. 1-deoxy-D-xylulose 5-phosphate contacts are provided by Ser-208, Asn-213, Lys-214, and Glu-217. Glu-217 is a Mn(2+) binding site.

Belongs to the DXR family. Requires Mg(2+) as cofactor. Mn(2+) serves as cofactor.

The catalysed reaction is 2-C-methyl-D-erythritol 4-phosphate + NADP(+) = 1-deoxy-D-xylulose 5-phosphate + NADPH + H(+). Its pathway is isoprenoid biosynthesis; isopentenyl diphosphate biosynthesis via DXP pathway; isopentenyl diphosphate from 1-deoxy-D-xylulose 5-phosphate: step 1/6. Functionally, catalyzes the NADPH-dependent rearrangement and reduction of 1-deoxy-D-xylulose-5-phosphate (DXP) to 2-C-methyl-D-erythritol 4-phosphate (MEP). The protein is 1-deoxy-D-xylulose 5-phosphate reductoisomerase of Listeria welshimeri serovar 6b (strain ATCC 35897 / DSM 20650 / CCUG 15529 / CIP 8149 / NCTC 11857 / SLCC 5334 / V8).